The chain runs to 151 residues: MDNNDYKKFYLIREDVLPESVVKTLKIKDALKNNPELSIYEAVKLFDLSRSAFYKYRETIFPVDEKMLDHREFTLILYVNDIVGMLAQVLNTVSKLQLSVLTIHQSVPMEEKATITLSLSAKDTTISIDEIIKALRNIEHVSKVELISMSM.

The ACT domain occupies 74–149 (TLILYVNDIV…HVSKVELISM (76 aa)).

This sequence belongs to the UPF0735 family.

In Staphylococcus haemolyticus (strain JCSC1435), this protein is UPF0735 ACT domain-containing protein SH1278.